Here is a 269-residue protein sequence, read N- to C-terminus: Tryptophan synthase alpha chain (269 aa).

Active-site proton acceptor residues include glutamate 49 and aspartate 60.

Belongs to the TrpA family. In terms of assembly, tetramer of two alpha and two beta chains.

It catalyses the reaction (1S,2R)-1-C-(indol-3-yl)glycerol 3-phosphate + L-serine = D-glyceraldehyde 3-phosphate + L-tryptophan + H2O. It functions in the pathway amino-acid biosynthesis; L-tryptophan biosynthesis; L-tryptophan from chorismate: step 5/5. In terms of biological role, the alpha subunit is responsible for the aldol cleavage of indoleglycerol phosphate to indole and glyceraldehyde 3-phosphate. The sequence is that of Tryptophan synthase alpha chain from Pseudomonas entomophila (strain L48).